Here is a 452-residue protein sequence, read N- to C-terminus: Ribosomal protein uS12 methylthiotransferase RimO (452 aa).

An MTTase N-terminal domain is found at 3 to 118 (GKIGFVSLGC…VMQVIHLHLP (116 aa)). The [4Fe-4S] cluster site is built by Cys-12, Cys-48, Cys-77, Cys-149, Cys-153, and Cys-156. In terms of domain architecture, Radical SAM core spans 135 to 382 (LTPKHYAYLK…AKAEEISVGR (248 aa)). The region spanning 384–452 (AKKIGKRLQV…SQGHDLIAET (69 aa)) is the TRAM domain.

This sequence belongs to the methylthiotransferase family. RimO subfamily. Requires [4Fe-4S] cluster as cofactor.

Its subcellular location is the cytoplasm. The enzyme catalyses L-aspartate(89)-[ribosomal protein uS12]-hydrogen + (sulfur carrier)-SH + AH2 + 2 S-adenosyl-L-methionine = 3-methylsulfanyl-L-aspartate(89)-[ribosomal protein uS12]-hydrogen + (sulfur carrier)-H + 5'-deoxyadenosine + L-methionine + A + S-adenosyl-L-homocysteine + 2 H(+). Catalyzes the methylthiolation of an aspartic acid residue of ribosomal protein uS12. The polypeptide is Ribosomal protein uS12 methylthiotransferase RimO (Polynucleobacter necessarius subsp. necessarius (strain STIR1)).